A 65-amino-acid chain; its full sequence is Defensin-B3 (65 aa).

The first 21 residues, 1–21, serve as a signal peptide directing secretion; that stretch reads MRLLLVFFFLSLLDQAPPARS. 3 cysteine pairs are disulfide-bonded: cysteine 29-cysteine 58, cysteine 36-cysteine 50, and cysteine 40-cysteine 59. Positions 62–65 are excised as a propeptide; sequence ESPR.

The protein belongs to the beta-defensin family. In terms of tissue distribution, lowly expressed in spleen, and expressed at lower levels in kidney, lung and testis.

It is found in the secreted. Its function is as follows. Has antimicrobial activity. This is Defensin-B3 from Ornithorhynchus anatinus (Duckbill platypus).